An 826-amino-acid polypeptide reads, in one-letter code: Sister chromatid cohesion protein PDS5 homolog D (826 aa).

HEAT repeat units lie at residues 18-54, 55-94, 151-188, 189-226, and 230-267; these read GTNLLSPPSSTDDLLTLLDETESLLKNVEQDQPLSMQ, SALIPSRNALVSVDLLSHPDSDVRVSVVSCLTEIVRITAP, DLILQMFRNFFKFIRSDHPQLVFSSMELIMIAIIDETE, QVSTDLLDSLLATVKKENQNVSPMSWSLAEKVLSRCAR, and PYIIEALKSRGTSLDMYSPVVSSICQSVFNTPKVHSPV. Disordered regions lie at residues 261 to 551 and 640 to 826; these read PKVH…EVES and KKSK…KRKS. 2 stretches are compositionally biased toward basic and acidic residues: residues 269 to 286 and 296 to 309; these read TKEHEEKLDLGHSRKENL and RHETRGINEKEKVR. Positions 281-288 match the Nuclear localization signal 1 motif; sequence SRKENLSK. Positions 311 to 323 are enriched in polar residues; that stretch reads GNKSSLLKQSLKQ. The short motif at 357 to 364 is the Nuclear localization signal 2 element; sequence GKRDPLKT. Residues 396 to 408 show a composition bias toward polar residues; that stretch reads SPATSSRSLTGSL. An HEAT 6 repeat occupies 424–461; the sequence is SLSSPRLKKLASCFRDEEPNQEDDRKIGNSSKQTRSKN. The segment covering 437–450 has biased composition (basic and acidic residues); that stretch reads FRDEEPNQEDDRKI. A compositionally biased stretch (polar residues) spans 451 to 460; sequence GNSSKQTRSK. The span at 644–663 shows a compositional bias: low complexity; the sequence is NVAVSVEPTSSSGVRSSSRT. Residues 665-701 are compositionally biased toward basic and acidic residues; the sequence is MKKDCGKRLNKQVEKTREGKNLRSLKELNAETDRTAE. Residues 702 to 724 show a composition bias toward acidic residues; it reads EQEVSLEAESDDRSEEQEYEDDC. Residues 725–746 are compositionally biased toward basic and acidic residues; that stretch reads SDKKEQSQDKGVEAETKEEEKQ. Acidic residues-rich tracts occupy residues 752-763, 771-800, and 811-826; these read GESEGEDSESEE, DDMEDDEEEEEEEIDHMEDEAEEEKEEVDD, and EKEEEEEEEDEEKRKS. A coiled-coil region spans residues 770–825; it reads TDDMEDDEEEEEEEIDHMEDEAEEEKEEVDDKEASANMSEIEKEEEEEEEDEEKRK.

This sequence belongs to the PDS5 family. As to quaternary structure, interacts with the cohesin complex.

The protein resides in the nucleus. In terms of biological role, cohesin cofactor dispensable during the meiotic division but playing an important role in DNA repair by homologous recombination (HR) probably by helping SMC5/SMC6 complex. Regulator of sister chromatid cohesion in mitosis which may stabilize cohesin complex association with chromatin. May couple sister chromatid cohesion during mitosis to DNA replication. Cohesion ensures that chromosome partitioning is accurate in both meiotic and mitotic cells and plays an important role in DNA repair. This is Sister chromatid cohesion protein PDS5 homolog D from Arabidopsis thaliana (Mouse-ear cress).